Consider the following 201-residue polypeptide: Peptidyl-tRNA hydrolase (201 aa).

Tyrosine 15 is a tRNA binding site. Residue histidine 20 is the Proton acceptor of the active site. TRNA-binding residues include tyrosine 66, asparagine 68, and asparagine 114.

The protein belongs to the PTH family. As to quaternary structure, monomer.

The protein localises to the cytoplasm. The enzyme catalyses an N-acyl-L-alpha-aminoacyl-tRNA + H2O = an N-acyl-L-amino acid + a tRNA + H(+). Hydrolyzes ribosome-free peptidyl-tRNAs (with 1 or more amino acids incorporated), which drop off the ribosome during protein synthesis, or as a result of ribosome stalling. In terms of biological role, catalyzes the release of premature peptidyl moieties from peptidyl-tRNA molecules trapped in stalled 50S ribosomal subunits, and thus maintains levels of free tRNAs and 50S ribosomes. In Burkholderia mallei (strain NCTC 10247), this protein is Peptidyl-tRNA hydrolase.